A 144-amino-acid polypeptide reads, in one-letter code: Large ribosomal subunit protein uL15 (144 aa).

The segment at 1–57 (MELNNLKPAEGSKHAKRRVGRGIGSGLGKTAGRGHKGQKSRSGGFHKVGFEGGQMPL) is disordered. The span at 21–31 (RGIGSGLGKTA) shows a compositional bias: gly residues.

This sequence belongs to the universal ribosomal protein uL15 family. In terms of assembly, part of the 50S ribosomal subunit.

Its function is as follows. Binds to the 23S rRNA. This is Large ribosomal subunit protein uL15 from Paraburkholderia phytofirmans (strain DSM 17436 / LMG 22146 / PsJN) (Burkholderia phytofirmans).